The chain runs to 391 residues: Winged helix repair factor 1 (391 aa).

2 stretches are compositionally biased toward low complexity: residues 1–24 (MNIK…PSPI) and 49–63 (LSFN…SNIN). Residues 1 to 95 (MNIKRNQNNS…SITTTTATST (95 aa)) form a disordered region. Over residues 64-74 (GEEDNDDDDRE) the composition is skewed to acidic residues. A compositionally biased stretch (low complexity) spans 82–95 (NPNPSITTTTATST).

This sequence belongs to the STK19 family.

It localises to the nucleus. Its function is as follows. DNA-binding protein which is required for efficient transcription-coupled nucleotide excision repair. This is Winged helix repair factor 1 from Dictyostelium discoideum (Social amoeba).